We begin with the raw amino-acid sequence, 269 residues long: uncharacterized protein (269 aa).

The next 5 membrane-spanning stretches (helical) occupy residues 65-85 (FSLF…LFVM), 156-176 (VTSV…ISMV), 182-202 (YTRI…WLGF), 206-226 (MMSF…NDFW), and 242-262 (TLSA…EFSF). A Di-lysine motif motif is present at residues 266–269 (KKKW).

The protein belongs to the SURF4 family.

The protein localises to the membrane. This is an uncharacterized protein from Caenorhabditis elegans.